Consider the following 141-residue polypeptide: Transcription antitermination protein NusB (141 aa).

It belongs to the NusB family.

Its function is as follows. Involved in transcription antitermination. Required for transcription of ribosomal RNA (rRNA) genes. Binds specifically to the boxA antiterminator sequence of the ribosomal RNA (rrn) operons. The sequence is that of Transcription antitermination protein NusB from Desulfotalea psychrophila (strain LSv54 / DSM 12343).